Here is a 305-residue protein sequence, read N- to C-terminus: Serine/threonine-protein phosphatase PP2A catalytic subunit (305 aa).

Asp-53, His-55, Asp-81, and Asn-113 together coordinate Mn(2+). Catalysis depends on His-114, which acts as the Proton donor. Residues His-163 and His-237 each contribute to the Mn(2+) site.

It belongs to the PPP phosphatase family. PP-2A subfamily. The cofactor is Mn(2+).

It carries out the reaction O-phospho-L-seryl-[protein] + H2O = L-seryl-[protein] + phosphate. The enzyme catalyses O-phospho-L-threonyl-[protein] + H2O = L-threonyl-[protein] + phosphate. This is Serine/threonine-protein phosphatase PP2A catalytic subunit from Helianthus annuus (Common sunflower).